We begin with the raw amino-acid sequence, 743 residues long: Elongation factor 2 (743 aa).

Positions asparagine 19–lysine 265 constitute a tr-type G domain. GTP is bound by residues alanine 28–threonine 35, aspartate 94–histidine 98, and asparagine 148–aspartate 151. Position 615 is a diphthamide (histidine 615).

This sequence belongs to the TRAFAC class translation factor GTPase superfamily. Classic translation factor GTPase family. EF-G/EF-2 subfamily.

It localises to the cytoplasm. Catalyzes the GTP-dependent ribosomal translocation step during translation elongation. During this step, the ribosome changes from the pre-translocational (PRE) to the post-translocational (POST) state as the newly formed A-site-bound peptidyl-tRNA and P-site-bound deacylated tRNA move to the P and E sites, respectively. Catalyzes the coordinated movement of the two tRNA molecules, the mRNA and conformational changes in the ribosome. This is Elongation factor 2 from Nanoarchaeum equitans (strain Kin4-M).